A 175-amino-acid chain; its full sequence is Ribosome maturation factor RimP (175 aa).

Residues 152 to 175 are disordered; that stretch reads EFNRPTDGPGDDGDDGGDDEAGEA. The segment covering 160 to 175 has biased composition (acidic residues); the sequence is PGDDGDDGGDDEAGEA.

The protein belongs to the RimP family.

It is found in the cytoplasm. Functionally, required for maturation of 30S ribosomal subunits. In Nocardioides sp. (strain ATCC BAA-499 / JS614), this protein is Ribosome maturation factor RimP.